The sequence spans 164 residues: Cyanate hydratase (164 aa).

Active-site residues include Arg90, Glu93, and Ser116.

This sequence belongs to the cyanase family.

It catalyses the reaction cyanate + hydrogencarbonate + 3 H(+) = NH4(+) + 2 CO2. Functionally, catalyzes the reaction of cyanate with bicarbonate to produce ammonia and carbon dioxide. In Ricinus communis (Castor bean), this protein is Cyanate hydratase.